The following is a 255-amino-acid chain: Protein NEN4 (255 aa).

The region spanning 11–174 (VFFDLETNVP…DDVRMNLEVL (164 aa)) is the Exonuclease domain. Positions 14 and 16 each coordinate Mg(2+). The active-site Proton donor/acceptor is H161. D166 contacts Mg(2+).

Mg(2+) is required as a cofactor. As to expression, expressed in the sieve elements and phloem pole pericycle cells.

It is found in the nucleus. In terms of biological role, probable exonuclease required for enuclation of sieve elements. In Arabidopsis thaliana (Mouse-ear cress), this protein is Protein NEN4.